The following is a 64-amino-acid chain: MKIHYLLFAFLLVLLSPLAGVFSKTINNPVSCCMIGGICRYLCKGNILQNGSCGVTSLNCCKRK.

A signal peptide spans 1–23 (MKIHYLLFAFLLVLLSPLAGVFS). Disulfide bonds link cysteine 32/cysteine 60, cysteine 39/cysteine 53, and cysteine 43/cysteine 61.

This sequence belongs to the beta-defensin family.

The protein resides in the secreted. Has antibacterial activity. The sequence is that of Beta-defensin 5 (Defb5) from Mus musculus (Mouse).